Consider the following 318-residue polypeptide: Thymidylate synthase (318 aa).

Residues Arg25 and 180 to 181 (RR) contribute to the dUMP site. Cys200 functions as the Nucleophile in the catalytic mechanism. DUMP-binding positions include 220-223 (RSGD), Asn231, and 261-263 (HIY). A (6R)-5,10-methylene-5,6,7,8-tetrahydrofolate-binding site is contributed by Asp223. Ala317 provides a ligand contact to (6R)-5,10-methylene-5,6,7,8-tetrahydrofolate.

It belongs to the thymidylate synthase family. Bacterial-type ThyA subfamily. As to quaternary structure, homodimer.

Its subcellular location is the cytoplasm. It catalyses the reaction dUMP + (6R)-5,10-methylene-5,6,7,8-tetrahydrofolate = 7,8-dihydrofolate + dTMP. The protein operates within pyrimidine metabolism; dTTP biosynthesis. Functionally, catalyzes the reductive methylation of 2'-deoxyuridine-5'-monophosphate (dUMP) to 2'-deoxythymidine-5'-monophosphate (dTMP) while utilizing 5,10-methylenetetrahydrofolate (mTHF) as the methyl donor and reductant in the reaction, yielding dihydrofolate (DHF) as a by-product. This enzymatic reaction provides an intracellular de novo source of dTMP, an essential precursor for DNA biosynthesis. The sequence is that of Thymidylate synthase from Bacillus cytotoxicus (strain DSM 22905 / CIP 110041 / 391-98 / NVH 391-98).